The sequence spans 520 residues: Poly(A)-specific ribonuclease PNLDC1 (520 aa).

Positions 17, 19, 260, and 354 each coordinate Mg(2+). A helical membrane pass occupies residues Val495–Leu515.

Belongs to the CAF1 family. Requires Mg(2+) as cofactor.

Its subcellular location is the endoplasmic reticulum membrane. It catalyses the reaction Exonucleolytic cleavage of poly(A) to 5'-AMP.. In terms of biological role, 3'-exoribonuclease that has a preference for poly(A) tails of mRNAs, thereby efficiently degrading poly(A) tails. Exonucleolytic degradation of the poly(A) tail is often the first step in the decay of eukaryotic mRNAs and is also used to silence certain maternal mRNAs translationally during oocyte maturation and early embryonic development. May act as a regulator of multipotency in embryonic stem cells. Is a critical factor for proper spermatogenesis, involved in pre-piRNAs processing to generate mature piRNAs. In Homo sapiens (Human), this protein is Poly(A)-specific ribonuclease PNLDC1.